We begin with the raw amino-acid sequence, 1349 residues long: DNA-directed RNA polymerase subunit beta' (1349 aa).

The Zn(2+) site is built by C219, C293, C300, and C303. The segment at 1298-1349 is disordered; sequence LDSPTLGESGFGSRRAERSVLDDEDELIADEVVDDDDFEEEEEDDEDDFDDE. Residues 1319 to 1349 show a composition bias toward acidic residues; sequence DDEDELIADEVVDDDDFEEEEEDDEDDFDDE.

This sequence belongs to the RNA polymerase beta' chain family. RpoC2 subfamily. In terms of assembly, in cyanobacteria the RNAP catalytic core is composed of 2 alpha, 1 beta, 1 beta', 1 gamma and 1 omega subunit. When a sigma factor is associated with the core the holoenzyme is formed, which can initiate transcription. Zn(2+) is required as a cofactor.

The catalysed reaction is RNA(n) + a ribonucleoside 5'-triphosphate = RNA(n+1) + diphosphate. DNA-dependent RNA polymerase catalyzes the transcription of DNA into RNA using the four ribonucleoside triphosphates as substrates. The sequence is that of DNA-directed RNA polymerase subunit beta' from Nostoc punctiforme (strain ATCC 29133 / PCC 73102).